A 210-amino-acid chain; its full sequence is Large ribosomal subunit protein uL4 (210 aa).

Over residues 41 to 51 (ANARQGTQSTK) the composition is skewed to polar residues. Disordered stretches follow at residues 41–60 (ANAR…QGSS) and 67–98 (KGTG…DFSK).

It belongs to the universal ribosomal protein uL4 family. In terms of assembly, part of the 50S ribosomal subunit.

One of the primary rRNA binding proteins, this protein initially binds near the 5'-end of the 23S rRNA. It is important during the early stages of 50S assembly. It makes multiple contacts with different domains of the 23S rRNA in the assembled 50S subunit and ribosome. In terms of biological role, forms part of the polypeptide exit tunnel. The sequence is that of Large ribosomal subunit protein uL4 from Dehalococcoides mccartyi (strain ATCC BAA-2100 / JCM 16839 / KCTC 5957 / BAV1).